The chain runs to 233 residues: MDQEEGLKALDNIVTQFNAYEDFLDSQITTVDLYYLEDETLARQLVELGYRGTGERVKREDFEARKAAIEIARLAERAQQKTLTSAGKDLQDNFLTALAMREEDNRSGKLSSVIFIRDRNSHGQEISGYIDYAHRLKTEDFEVYFTGKKRLLPRPTDISFYNWDADIAVSNSSPNYQVIADNPEGLLFRYKRDRKILNVDPKAQPGDNSTRITILTELYVQAVIFDHISRRKT.

The protein localises to the cytoplasm. Its subcellular location is the nucleus. In terms of biological role, may be involved in spermatogenesis. This chain is Cilia- and flagella-associated protein 299, found in Homo sapiens (Human).